The primary structure comprises 225 residues: Thaumatin-like protein (225 aa).

The first 24 residues, 1–24 (MSTFKSLSLSALLFIAFLFTCARG), serve as a signal peptide directing secretion. 8 cysteine pairs are disulfide-bonded: Cys33–Cys224, Cys74–Cys84, Cys89–Cys95, Cys140–Cys213, Cys146–Cys196, Cys154–Cys164, Cys168–Cys177, and Cys178–Cys183. N-linked (GlcNAc...) asparagine glycosylation occurs at Asn187.

The protein belongs to the thaumatin family. In terms of processing, N-glycosylated. Woody stem plug.

The protein localises to the secreted. Has antifungal activity. In Actinidia deliciosa (Kiwi), this protein is Thaumatin-like protein (tlp).